Reading from the N-terminus, the 222-residue chain is MKKAVCLLSGGMDSTTLAYVAKDTGYDIVALHFTYGQRTEAKERECARAVAKNLDALDFVEISLEHFTKIGASSLTDTSIPVEEYAGEEEGVPSTYVPFRNANLLAIATSLAEARRAEAVFIGVQTGDYPGYPDCRPEFIEAFQRAVDLGTAAEPRIVLMTPFVRMSKVDIVRKGLALGVPYELTWSCYQNDDRACGVCSSCHYRREAFRELGLEDPIEYER.

Position 8–18 (8–18 (LSGGMDSTTLA)) interacts with ATP. 4 residues coordinate Zn(2+): C188, C196, C199, and C202.

Belongs to the QueC family. Zn(2+) is required as a cofactor.

It carries out the reaction 7-carboxy-7-deazaguanine + NH4(+) + ATP = 7-cyano-7-deazaguanine + ADP + phosphate + H2O + H(+). It participates in purine metabolism; 7-cyano-7-deazaguanine biosynthesis. In terms of biological role, catalyzes the ATP-dependent conversion of 7-carboxy-7-deazaguanine (CDG) to 7-cyano-7-deazaguanine (preQ(0)). This chain is 7-cyano-7-deazaguanine synthase, found in Methanoculleus marisnigri (strain ATCC 35101 / DSM 1498 / JR1).